The following is a 338-amino-acid chain: Bifunctional methylenetetrahydrofolate dehydrogenase/cyclohydrolase 2, mitochondrial (338 aa).

Substrate contacts are provided by residues 89-93 (YVRNK) and 136-138 (VQL). NAD(+)-binding positions include 205-207 (GRS) and R238. 314 to 318 (PGGVG) provides a ligand contact to substrate.

This sequence belongs to the tetrahydrofolate dehydrogenase/cyclohydrolase family. The cofactor is Mg(2+). Widely expressed.

The protein localises to the mitochondrion inner membrane. It catalyses the reaction (6R)-5,10-methylene-5,6,7,8-tetrahydrofolate + NADP(+) = (6R)-5,10-methenyltetrahydrofolate + NADPH. The enzyme catalyses (6R)-5,10-methylene-5,6,7,8-tetrahydrofolate + NAD(+) = (6R)-5,10-methenyltetrahydrofolate + NADH. It carries out the reaction (6R)-5,10-methenyltetrahydrofolate + H2O = (6R)-10-formyltetrahydrofolate + H(+). It participates in one-carbon metabolism; tetrahydrofolate interconversion. Bifunctional mitochondrial folate-interconverting enzyme that has both NAD/NADP-dependent methylenetetrahydrofolate dehydrogenase and methenyltetrahydrofolate cyclohydrolase activities. Its function is as follows. Has no NAD/NADP-dependent methylenetetrahydrofolate dehydrogenase activity. The sequence is that of Bifunctional methylenetetrahydrofolate dehydrogenase/cyclohydrolase 2, mitochondrial from Rattus norvegicus (Rat).